The chain runs to 978 residues: Transcription factor MYCGRDRAFT_87993 (978 aa).

2 consecutive C2H2-type zinc fingers follow at residues 2 to 24 (VFCT…ILTH) and 30 to 52 (FKCF…YTVH). The zn(2)-C6 fungal-type DNA-binding region spans 79–105 (CSNCAKTKTKCDKKFPCSRCAGRNLRC). 2 disordered regions span residues 113–231 (ASKN…SPRF) and 426–445 (THRE…PSGA). Positions 152-165 (SSSPSSQKSGTPIS) are enriched in low complexity. The span at 432–445 (GTSNGSHSPNPSGA) shows a compositional bias: polar residues.

It localises to the nucleus. In terms of biological role, transcription factor; part of the gene cluster 29 that mediates the biosynthesis of dihydroxynaphthalene (DHN)-melanin, a bluish-green pigment forming a dark layer in the conidial wall that protects the conidia from UV radiations. The chain is Transcription factor MYCGRDRAFT_87993 from Zymoseptoria tritici (strain CBS 115943 / IPO323) (Speckled leaf blotch fungus).